The primary structure comprises 350 residues: tRNA uridine(34) hydroxylase (350 aa).

Residues aspartate 146–leucine 240 enclose the Rhodanese domain. Cysteine 200 acts as the Cysteine persulfide intermediate in catalysis. Basic and acidic residues predominate over residues arginine 319–glycine 328. The disordered stretch occupies residues arginine 319–glutamate 350.

Belongs to the TrhO family.

It carries out the reaction uridine(34) in tRNA + AH2 + O2 = 5-hydroxyuridine(34) in tRNA + A + H2O. Functionally, catalyzes oxygen-dependent 5-hydroxyuridine (ho5U) modification at position 34 in tRNAs. The protein is tRNA uridine(34) hydroxylase of Salmonella schwarzengrund (strain CVM19633).